Reading from the N-terminus, the 439-residue chain is Trigger factor (439 aa).

Residues 158-233 form the PPIase FKBP-type domain; it reads GDVINIEYTI…IKEVLKRTLM (76 aa). The interval 410 to 439 is disordered; it reads KEISADEPVEEQKEEEEKEEAGSENSENKE. A compositionally biased stretch (acidic residues) spans 414-428; sequence ADEPVEEQKEEEEKE.

Belongs to the FKBP-type PPIase family. Tig subfamily.

The protein localises to the cytoplasm. It carries out the reaction [protein]-peptidylproline (omega=180) = [protein]-peptidylproline (omega=0). In terms of biological role, involved in protein export. Acts as a chaperone by maintaining the newly synthesized protein in an open conformation. Functions as a peptidyl-prolyl cis-trans isomerase. The protein is Trigger factor of Kosmotoga olearia (strain ATCC BAA-1733 / DSM 21960 / TBF 19.5.1).